A 230-amino-acid chain; its full sequence is Enolase-phosphatase E1 (230 aa).

Belongs to the HAD-like hydrolase superfamily. MasA/MtnC family. In terms of assembly, monomer. Mg(2+) is required as a cofactor.

It carries out the reaction 5-methylsulfanyl-2,3-dioxopentyl phosphate + H2O = 1,2-dihydroxy-5-(methylsulfanyl)pent-1-en-3-one + phosphate. It participates in amino-acid biosynthesis; L-methionine biosynthesis via salvage pathway; L-methionine from S-methyl-5-thio-alpha-D-ribose 1-phosphate: step 3/6. Its pathway is amino-acid biosynthesis; L-methionine biosynthesis via salvage pathway; L-methionine from S-methyl-5-thio-alpha-D-ribose 1-phosphate: step 4/6. Functionally, bifunctional enzyme that catalyzes the enolization of 2,3-diketo-5-methylthiopentyl-1-phosphate (DK-MTP-1-P) into the intermediate 2-hydroxy-3-keto-5-methylthiopentenyl-1-phosphate (HK-MTPenyl-1-P), which is then dephosphorylated to form the acireductone 1,2-dihydroxy-3-keto-5-methylthiopentene (DHK-MTPene). This is Enolase-phosphatase E1 from Marinobacter nauticus (strain ATCC 700491 / DSM 11845 / VT8) (Marinobacter aquaeolei).